Reading from the N-terminus, the 355-residue chain is Protein ECERIFERUM 16 (355 aa).

2 disordered regions span residues 1 to 60 (MDSK…LPSN) and 296 to 315 (HSST…KIHM). Residues 7 to 28 (AKSKRAHTLHHSKKSHSVHKPK) show a composition bias toward basic residues. Composition is skewed to polar residues over residues 41–53 (QGNQ…QSRR) and 296–310 (HSST…NPSD).

Interacts with RST1. Expressed in taproots, lateral roots, root tips, leaf veins, cauline leaves, inflorescences, flowers, and siliques.

It is found in the cytoplasm. The protein resides in the cytosol. Its subcellular location is the endoplasmic reticulum. Its function is as follows. Together with RST1, acts as a cofactor of the cytoplasmic exosome and connects the cytosolic RNA exosome to the SKI complex. Acts as a post-transcriptional gene silencing (PTGS) suppressor. CER16/RIPR can, like RST1 suppress the production of small interfering RNAs (siRNAs) from the CER3 locus, which is involved in cuticule membrane and wax production, and in the typhine and sporopollenin biosynthesis of pollen. This is Protein ECERIFERUM 16 from Arabidopsis thaliana (Mouse-ear cress).